We begin with the raw amino-acid sequence, 176 residues long: Imidazoleglycerol-phosphate dehydratase (176 aa).

Belongs to the imidazoleglycerol-phosphate dehydratase family.

The protein localises to the cytoplasm. The catalysed reaction is D-erythro-1-(imidazol-4-yl)glycerol 3-phosphate = 3-(imidazol-4-yl)-2-oxopropyl phosphate + H2O. Its pathway is amino-acid biosynthesis; L-histidine biosynthesis; L-histidine from 5-phospho-alpha-D-ribose 1-diphosphate: step 6/9. The polypeptide is Imidazoleglycerol-phosphate dehydratase (Pyrococcus furiosus (strain ATCC 43587 / DSM 3638 / JCM 8422 / Vc1)).